A 379-amino-acid polypeptide reads, in one-letter code: Peritrophin-48 (379 aa).

Positions 1–20 (MKAKTLTATLALILLAFAQA) are cleaved as a signal peptide. Chitin-binding type-2 domains lie at 25–83 (ASYC…NCFF) and 86–143 (ANPC…NTGN). Intrachain disulfides connect C60/C73 and C120/C133. N150 and N168 each carry an N-linked (GlcNAc...) asparagine glycan. 3 consecutive Chitin-binding type-2 domains span residues 151 to 208 (LSVC…ACSR), 224 to 283 (TSPC…RTLK), and 285 to 356 (CNRC…ACEN). C185 and C198 are oxidised to a cystine. N247 and N252 each carry an N-linked (GlcNAc...) asparagine glycan. Residues C324 and C337 are joined by a disulfide bond. N-linked (GlcNAc...) asparagine glycans are attached at residues N341, N356, and N373.

Post-translationally, glycosylated. In terms of tissue distribution, larval peritrophic membrane.

In terms of biological role, binds chitin and may bind related oligosaccharide structures. This is Peritrophin-48 from Chrysomya bezziana (Old world screw-worm fly).